Reading from the N-terminus, the 179-residue chain is MSILPIVIAPDERLITRASEVTDINDKIKELVNDMFETMYDAEGLGLAAVQVGVLKRIFVVDVQLETIENEPAGYGSTGKFYMINPEITELSDEQVILKEGCLSIPEQSHEIKRPKYLTVKYKDLDNEEQTLKASGWLARCIQHELDHLNGILYIRHLSKLKYDMAITKAQKIKKQHEQ.

Residues Cys102 and His144 each contribute to the Fe cation site. Residue Glu145 is part of the active site. His148 contributes to the Fe cation binding site.

This sequence belongs to the polypeptide deformylase family. Fe(2+) serves as cofactor.

It catalyses the reaction N-terminal N-formyl-L-methionyl-[peptide] + H2O = N-terminal L-methionyl-[peptide] + formate. Removes the formyl group from the N-terminal Met of newly synthesized proteins. Requires at least a dipeptide for an efficient rate of reaction. N-terminal L-methionine is a prerequisite for activity but the enzyme has broad specificity at other positions. The polypeptide is Peptide deformylase (Wolbachia sp. subsp. Drosophila simulans (strain wRi)).